The sequence spans 249 residues: 1-(5-phosphoribosyl)-5-[(5-phosphoribosylamino)methylideneamino] imidazole-4-carboxamide isomerase (249 aa).

Aspartate 8 functions as the Proton acceptor in the catalytic mechanism. Aspartate 130 functions as the Proton donor in the catalytic mechanism.

It belongs to the HisA/HisF family.

The protein localises to the cytoplasm. The enzyme catalyses 1-(5-phospho-beta-D-ribosyl)-5-[(5-phospho-beta-D-ribosylamino)methylideneamino]imidazole-4-carboxamide = 5-[(5-phospho-1-deoxy-D-ribulos-1-ylimino)methylamino]-1-(5-phospho-beta-D-ribosyl)imidazole-4-carboxamide. Its pathway is amino-acid biosynthesis; L-histidine biosynthesis; L-histidine from 5-phospho-alpha-D-ribose 1-diphosphate: step 4/9. The chain is 1-(5-phosphoribosyl)-5-[(5-phosphoribosylamino)methylideneamino] imidazole-4-carboxamide isomerase from Nitrosococcus oceani (strain ATCC 19707 / BCRC 17464 / JCM 30415 / NCIMB 11848 / C-107).